A 654-amino-acid polypeptide reads, in one-letter code: Potassium voltage-gated channel subfamily A member 4 (654 aa).

Topologically, residues 1–305 (MEVAMVSAES…LLFEYPESSS (305 aa)) are cytoplasmic. Residues 24–145 (QARARERERL…EEGRFYYSEE (122 aa)) form a disordered region. The span at 36–50 (SRAAAAAAVAAATAA) shows a compositional bias: low complexity. A compositionally biased stretch (basic residues) spans 81-99 (GSRRRRRQRTEKKKLHHRQ). S122 bears the Phosphoserine mark. Over residues 122–137 (SEEEEDEEEEEEEEEE) the composition is skewed to acidic residues. A helical transmembrane segment spans residues 306–327 (PARGIAIVSVLVILISIVIFCL). Over 328 to 371 (ETLPEFRDDRDLIMALSAGGHSRLLNDTSAPHLENSGHTIFNDP) the chain is Extracellular. An N-linked (GlcNAc...) asparagine glycan is attached at N353. The helical transmembrane segment at 372 to 393 (FFIVETVCIVWFSFEFVVRCFA) threads the bilayer. Residues 394 to 404 (CPSQALFFKNI) are Cytoplasmic-facing. Residues 405–425 (MNIIDIVSILPYFITLGTDLA) traverse the membrane as a helical segment. Topologically, residues 426–440 (QQQGGGNGQQQQAMS) are extracellular. The chain crosses the membrane as a helical; Voltage-sensor span at residues 441-461 (FAILRIIRLVRVFRIFKLSRH). Residues 462-476 (SKGLQILGHTLRASM) are Cytoplasmic-facing. The segment at 463 to 476 (KGLQILGHTLRASM) is S4-S5 linker. The chain crosses the membrane as a helical span at residues 477–498 (RELGLLIFFLFIGVILFSSAVY). The Extracellular segment spans residues 499–512 (FAEADEPTTHFQSI). Residues 513–524 (PDAFWWAVVTMT) constitute an intramembrane region (helical). The Selectivity filter motif lies at 525–530 (TVGYGD). Residues 525–532 (TVGYGDMK) lie within the membrane without spanning it. Topologically, residues 533 to 539 (PITVGGK) are extracellular. Residues 540–568 (IVGSLCAIAGVLTIALPVPVIVSNFNYFY) form a helical membrane-spanning segment. Residues 569-654 (HRETENEEQT…SNAKAVETDV (86 aa)) lie on the Cytoplasmic side of the membrane. S600 carries the phosphoserine; by PKA modification. The segment covering 630 to 641 (CQGKGDESETDK) has biased composition (basic and acidic residues). The disordered stretch occupies residues 630–654 (CQGKGDESETDKNNCSNAKAVETDV). Residues 652–654 (TDV) carry the PDZ-binding motif.

This sequence belongs to the potassium channel family. A (Shaker) (TC 1.A.1.2) subfamily. Kv1.4/KCNA4 sub-subfamily. Homotetramer and heterotetramer of potassium channel proteins. Interacts with KCNAB1 and KCNAB2. Interacts with DLG1, DLG2 and DLG4 via their PDZ domains. Interacts with SIGMAR1. Detected in a complex with KCNA1. Interacts with KCNA2. Part of a complex containing KCNA1, KCNAB1 and LGI1. Interacts (via cytoplasmic N-terminal domain) with KCNRG. As to expression, expressed in the brain, lens and retina.

The protein localises to the cell membrane. It localises to the cell projection. It is found in the axon. It carries out the reaction K(+)(in) = K(+)(out). Functionally, voltage-gated potassium channel that mediates transmembrane potassium transport in excitable membranes. Forms tetrameric potassium-selective channels through which potassium ions pass in accordance with their electrochemical gradient. The channel alternates between opened and closed conformations in response to the voltage difference across the membrane. Can form functional homotetrameric channels and heterotetrameric channels that contain variable proportions of KCNA1, KCNA2, KCNA4, KCNA5, and possibly other family members as well; channel properties depend on the type of alpha subunits that are part of the channel. Channel properties are modulated by cytoplasmic beta subunits that regulate the subcellular location of the alpha subunits and promote rapid inactivation. In vivo, membranes probably contain a mixture of heteromeric potassium channel complexes, making it difficult to assign currents observed in intact tissues to any particular potassium channel family member. Homotetrameric KCNA4 forms a potassium channel that opens in response to membrane depolarization, followed by rapid spontaneous channel closure. Likewise, a heterotetrameric channel formed by KCNA1 and KCNA4 shows rapid inactivation. The sequence is that of Potassium voltage-gated channel subfamily A member 4 (Kcna4) from Mus musculus (Mouse).